We begin with the raw amino-acid sequence, 347 residues long: Ribosomal RNA small subunit methyltransferase C (347 aa).

Belongs to the methyltransferase superfamily. RsmC family. As to quaternary structure, monomer.

The protein resides in the cytoplasm. It catalyses the reaction guanosine(1207) in 16S rRNA + S-adenosyl-L-methionine = N(2)-methylguanosine(1207) in 16S rRNA + S-adenosyl-L-homocysteine + H(+). Its function is as follows. Specifically methylates the guanine in position 1207 of 16S rRNA in the 30S particle. In Yersinia pseudotuberculosis serotype O:1b (strain IP 31758), this protein is Ribosomal RNA small subunit methyltransferase C.